The chain runs to 391 residues: Deoxyguanosinetriphosphate triphosphohydrolase-like protein (391 aa).

The 137-residue stretch at 62 to 198 (RLTHSLEVST…ASLADDISYI (137 aa)) folds into the HD domain.

It belongs to the dGTPase family. Type 2 subfamily.

In Rickettsia akari (strain Hartford), this protein is Deoxyguanosinetriphosphate triphosphohydrolase-like protein.